We begin with the raw amino-acid sequence, 369 residues long: S-(hydroxymethyl)glutathione dehydrogenase (369 aa).

7 residues coordinate Zn(2+): Cys-40, His-62, Cys-92, Cys-95, Cys-98, Cys-106, and Cys-169.

Belongs to the zinc-containing alcohol dehydrogenase family. Class-III subfamily. Homodimer. The cofactor is Zn(2+).

The protein resides in the cytoplasm. The enzyme catalyses S-(hydroxymethyl)glutathione + NADP(+) = S-formylglutathione + NADPH + H(+). It carries out the reaction S-(hydroxymethyl)glutathione + NAD(+) = S-formylglutathione + NADH + H(+). The catalysed reaction is a primary alcohol + NAD(+) = an aldehyde + NADH + H(+). It catalyses the reaction a secondary alcohol + NAD(+) = a ketone + NADH + H(+). The enzyme catalyses S-nitrosoglutathione + NADH + H(+) = S-(hydroxysulfenamide)glutathione + NAD(+). Functionally, has high formaldehyde dehydrogenase activity in the presence of glutathione and catalyzes the oxidation of normal alcohols in a reaction that is not GSH-dependent. In addition, hemithiolacetals other than those formed from GSH, including omega-thiol fatty acids, also are substrates. Also acts as a S-nitroso-glutathione reductase by catalyzing the NADH-dependent reduction of S-nitrosoglutathione. This is S-(hydroxymethyl)glutathione dehydrogenase (frmA) from Escherichia coli O1:K1 / APEC.